The following is a 363-amino-acid chain: 5-formaminoimidazole-4-carboxamide-1-(beta)-D-ribofuranosyl 5'-monophosphate synthetase (363 aa).

Positions 29 and 96 each coordinate 5-amino-1-(5-phospho-beta-D-ribosyl)imidazole-4-carboxamide. In terms of domain architecture, ATP-grasp spans R118 to E354. Residues P148–C210 and E232 contribute to the ATP site. N260 provides a ligand contact to 5-amino-1-(5-phospho-beta-D-ribosyl)imidazole-4-carboxamide. Mg(2+) contacts are provided by Q299 and E312.

The protein belongs to the phosphohexose mutase family. Mg(2+) is required as a cofactor. Requires Mn(2+) as cofactor.

The enzyme catalyses 5-amino-1-(5-phospho-beta-D-ribosyl)imidazole-4-carboxamide + formate + ATP = 5-formamido-1-(5-phospho-D-ribosyl)imidazole-4-carboxamide + ADP + phosphate. It functions in the pathway purine metabolism; IMP biosynthesis via de novo pathway; 5-formamido-1-(5-phospho-D-ribosyl)imidazole-4-carboxamide from 5-amino-1-(5-phospho-D-ribosyl)imidazole-4-carboxamide (formate route): step 1/1. Functionally, catalyzes the ATP- and formate-dependent formylation of 5-aminoimidazole-4-carboxamide-1-beta-d-ribofuranosyl 5'-monophosphate (AICAR) to 5-formaminoimidazole-4-carboxamide-1-beta-d-ribofuranosyl 5'-monophosphate (FAICAR) in the absence of folates. The polypeptide is 5-formaminoimidazole-4-carboxamide-1-(beta)-D-ribofuranosyl 5'-monophosphate synthetase (Methanosphaera stadtmanae (strain ATCC 43021 / DSM 3091 / JCM 11832 / MCB-3)).